Here is a 543-residue protein sequence, read N- to C-terminus: Glutamyl-tRNA(Gln) amidotransferase subunit A, chloroplastic/mitochondrial (543 aa).

Catalysis depends on charge relay system residues lysine 123 and serine 198. The Acyl-ester intermediate role is filled by serine 222.

It belongs to the amidase family. GatA subfamily. As to quaternary structure, subunit of the heterotrimeric GatCAB amidotransferase (AdT) complex, composed of A, B and C subunits.

The protein resides in the mitochondrion. It is found in the plastid. The protein localises to the chloroplast stroma. It carries out the reaction L-glutamyl-tRNA(Gln) + L-glutamine + ATP + H2O = L-glutaminyl-tRNA(Gln) + L-glutamate + ADP + phosphate + H(+). In terms of biological role, allows the formation of correctly charged Gln-tRNA(Gln) through the transamidation of misacylated Glu-tRNA(Gln) in chloroplasts and mitochondria. The reaction takes place in the presence of glutamine and ATP through an activated gamma-phospho-Glu-tRNA(Gln). This Oryza sativa subsp. japonica (Rice) protein is Glutamyl-tRNA(Gln) amidotransferase subunit A, chloroplastic/mitochondrial.